The chain runs to 533 residues: MDFIKPTIEYGDVWPLLVVFGVAAVGVLVEGFVPRAQRYLVQAALAIAGVVVALVGTILVARDLDVLGDGAARGAIDVEGTIAVDGPALFIWGMLLVFALGGALLFAERRLEGGVSAFAGQAAALPGTEAERQASTRGLEHTEVYPLMMFALGGMMLFAAANDLLTLFVALEVLSLPLYLLSGLARRRRLLSQEAALKYFMLGAFSSGFFLYGAALVYGFSGSMGFAEINEAVRDDVGNQTLLLIGIGMLSVGLLFKVGAVPFHSWTPDVYQGAPTAVTAFMAAGTKIAAFGAMLRLFYVAFGSDRWSWQPMLWIIAILTMLVGALIAIVQTDMKRMLAYSSVAHTGFLLTGVLGVQQASELADGEVTSLQAVLFYLVTYGFAVVGAFAVVTLVRDAGGEAGQFVRWRGIGRRSPLVAGVFAFFLLSMAGIPLTAGFVGKWAVFTVALAAGAWPVVIAAVLCSIIAVFFYVRVILLMFFEDDDVSAQGEVASVTKPSVLTSATIFVGVAATLVLGVVPGPVLDLAANAGQFVR.

The next 14 membrane-spanning stretches (helical) occupy residues Val13–Val33, Leu40–Val60, Pro87–Ala107, His141–Ala161, Leu164–Leu184, Phe200–Phe220, Leu243–Phe263, Pro275–Leu295, Gln310–Val330, Met337–Gln357, Val373–Leu393, Val417–Phe437, Gly451–Val471, and Ala502–Leu522.

The protein belongs to the complex I subunit 2 family. In terms of assembly, NDH-1 is composed of 14 different subunits. Subunits NuoA, H, J, K, L, M, N constitute the membrane sector of the complex.

Its subcellular location is the cell membrane. The catalysed reaction is a quinone + NADH + 5 H(+)(in) = a quinol + NAD(+) + 4 H(+)(out). NDH-1 shuttles electrons from NADH, via FMN and iron-sulfur (Fe-S) centers, to quinones in the respiratory chain. The immediate electron acceptor for the enzyme in this species is believed to be a menaquinone. Couples the redox reaction to proton translocation (for every two electrons transferred, four hydrogen ions are translocated across the cytoplasmic membrane), and thus conserves the redox energy in a proton gradient. The sequence is that of NADH-quinone oxidoreductase subunit N from Nocardioides sp. (strain ATCC BAA-499 / JS614).